A 354-amino-acid polypeptide reads, in one-letter code: UDP-N-acetylglucosamine--N-acetylmuramyl-(pentapeptide) pyrophosphoryl-undecaprenol N-acetylglucosamine transferase (354 aa).

UDP-N-acetyl-alpha-D-glucosamine-binding positions include 13-15 (SGG), Asn-125, Ser-189, Ile-242, 261-266 (ALTVSE), and Gln-286.

This sequence belongs to the glycosyltransferase 28 family. MurG subfamily.

Its subcellular location is the cell inner membrane. The enzyme catalyses di-trans,octa-cis-undecaprenyl diphospho-N-acetyl-alpha-D-muramoyl-L-alanyl-D-glutamyl-meso-2,6-diaminopimeloyl-D-alanyl-D-alanine + UDP-N-acetyl-alpha-D-glucosamine = di-trans,octa-cis-undecaprenyl diphospho-[N-acetyl-alpha-D-glucosaminyl-(1-&gt;4)]-N-acetyl-alpha-D-muramoyl-L-alanyl-D-glutamyl-meso-2,6-diaminopimeloyl-D-alanyl-D-alanine + UDP + H(+). It participates in cell wall biogenesis; peptidoglycan biosynthesis. Its function is as follows. Cell wall formation. Catalyzes the transfer of a GlcNAc subunit on undecaprenyl-pyrophosphoryl-MurNAc-pentapeptide (lipid intermediate I) to form undecaprenyl-pyrophosphoryl-MurNAc-(pentapeptide)GlcNAc (lipid intermediate II). This is UDP-N-acetylglucosamine--N-acetylmuramyl-(pentapeptide) pyrophosphoryl-undecaprenol N-acetylglucosamine transferase from Buchnera aphidicola subsp. Acyrthosiphon pisum (strain APS) (Acyrthosiphon pisum symbiotic bacterium).